The sequence spans 397 residues: Iron-sulfur cluster assembly SufBD family protein Rv1462 (397 aa).

Threonine 2 bears the N-acetylthreonine mark.

It belongs to the iron-sulfur cluster assembly SufBD family.

The sequence is that of Iron-sulfur cluster assembly SufBD family protein Rv1462 from Mycobacterium tuberculosis (strain ATCC 25618 / H37Rv).